We begin with the raw amino-acid sequence, 342 residues long: Ribosomal RNA small subunit methyltransferase C (342 aa).

It belongs to the methyltransferase superfamily. RsmC family. In terms of assembly, monomer.

Its subcellular location is the cytoplasm. It catalyses the reaction guanosine(1207) in 16S rRNA + S-adenosyl-L-methionine = N(2)-methylguanosine(1207) in 16S rRNA + S-adenosyl-L-homocysteine + H(+). Functionally, specifically methylates the guanine in position 1207 of 16S rRNA in the 30S particle. This is Ribosomal RNA small subunit methyltransferase C from Shewanella sp. (strain MR-4).